The following is a 339-amino-acid chain: Phenylalanine--tRNA ligase alpha subunit (339 aa).

Glu254 provides a ligand contact to Mg(2+).

It belongs to the class-II aminoacyl-tRNA synthetase family. Phe-tRNA synthetase alpha subunit type 1 subfamily. In terms of assembly, tetramer of two alpha and two beta subunits. It depends on Mg(2+) as a cofactor.

It is found in the cytoplasm. The catalysed reaction is tRNA(Phe) + L-phenylalanine + ATP = L-phenylalanyl-tRNA(Phe) + AMP + diphosphate + H(+). This is Phenylalanine--tRNA ligase alpha subunit from Clostridium botulinum (strain Langeland / NCTC 10281 / Type F).